The primary structure comprises 370 residues: MTALNKKWLSGLVAGALMAVSVGTLAAEQKTLHIYNWSDYIAPDTVANFEKETGIKVVYDVFDSNEVLEGKLMAGSTGFDLVVPSASFLERQLTAGVFQPLDKSKLPEWKNLDPELLKLVAKHDPDNKFAMPYMWATTGIGYNVDKVKAVLGENAPVDSWDLILKPENLEKLKSCGVSFLDAPEEVFATVLNYLGKDPNSTKADDYTGPATDLLLKLRPNIRYFHSSQYINDLANGDICVAIGWAGDVWQASNRAKEAKNGVNVSFSIPKEGAMAFFDVFAMPADAKNKDEAYQFLNYLLRPDVVAHISDHVFYANANKAATPLVSAEVRENPGIYPPADVRAKLFTLKVQDPKIDRVRTRAWTKVKSGK.

A signal peptide spans 1–26 (MTALNKKWLSGLVAGALMAVSVGTLA). A putrescine-binding site is contributed by serine 38. An intrachain disulfide couples cysteine 175 to cysteine 239. Residues aspartate 247 and aspartate 278 each coordinate putrescine.

The protein belongs to the bacterial solute-binding protein PotD/PotF family. As to quaternary structure, the complex is composed of two ATP-binding proteins (PotG), two transmembrane proteins (PotH and PotI) and a solute-binding protein (PotF).

Its subcellular location is the periplasm. Its activity is regulated as follows. Transport is feedback inhibited by intracellular polyamines. Functionally, part of the ABC transporter complex PotFGHI involved in putrescine uptake. Binds putrescine. Imports putrescine for maintenance of the optimal concentration of polyamines necessary for cell growth in the presence of glucose. The protein is Putrescine-binding periplasmic protein PotF of Escherichia coli (strain K12).